A 152-amino-acid polypeptide reads, in one-letter code: Small ribosomal subunit protein uS11 (152 aa).

It belongs to the universal ribosomal protein uS11 family. In terms of assembly, component of the small ribosomal subunit. Part of the small subunit (SSU) processome, composed of more than 70 proteins and the RNA chaperone small nucleolar RNA (snoRNA) U3.

The protein resides in the cytoplasm. It localises to the nucleus. It is found in the nucleolus. Component of the small ribosomal subunit. The ribosome is a large ribonucleoprotein complex responsible for the synthesis of proteins in the cell. Part of the small subunit (SSU) processome, first precursor of the small eukaryotic ribosomal subunit. During the assembly of the SSU processome in the nucleolus, many ribosome biogenesis factors, an RNA chaperone and ribosomal proteins associate with the nascent pre-rRNA and work in concert to generate RNA folding, modifications, rearrangements and cleavage as well as targeted degradation of pre-ribosomal RNA by the RNA exosome. This Caenorhabditis elegans protein is Small ribosomal subunit protein uS11 (rps-14).